Consider the following 158-residue polypeptide: Urease accessory protein UreE (158 aa).

Belongs to the UreE family.

It is found in the cytoplasm. Involved in urease metallocenter assembly. Binds nickel. Probably functions as a nickel donor during metallocenter assembly. The chain is Urease accessory protein UreE from Klebsiella pneumoniae subsp. pneumoniae (strain ATCC 700721 / MGH 78578).